Reading from the N-terminus, the 132-residue chain is Myelin P2 protein (132 aa).

N-acetylserine is present on Ser2. A (9Z)-octadecenoate-binding site is contributed by Arg107. Residue Arg107 participates in hexadecanoate binding. Cys118 and Cys125 are joined by a disulfide. 127-129 contributes to the (9Z)-octadecenoate binding site; sequence RIY. 127–129 contacts hexadecanoate; sequence RIY.

It belongs to the calycin superfamily. Fatty-acid binding protein (FABP) family. In terms of assembly, monomer.

The protein localises to the cytoplasm. Functionally, may play a role in lipid transport protein in Schwann cells. May bind cholesterol. The sequence is that of Myelin P2 protein (PMP2) from Bos taurus (Bovine).